The sequence spans 1487 residues: Major viral transcription factor (1487 aa).

Disordered stretches follow at residues 41-295 (AAPD…LPPG), 310-370 (LAKT…AEEA), and 803-1007 (PPTR…HTPR). The span at 66-75 (VIPPPSPTPE) shows a compositional bias: pro residues. Composition is skewed to low complexity over residues 165 to 193 (PSSASPGGGSPAPRVRSISISSSSSSSSS) and 201 to 213 (DGAGASSSSSSSS). Residues 214 to 224 (DDSDSDEGGEE) show a composition bias toward acidic residues. Positions 235 to 272 (AAKTPSAAGSPGPSSGGDRPAAGAATPKSCRSGAASPG) are enriched in low complexity. The segment covering 273 to 285 (APAPAPASAPAPS) has biased composition (pro residues). 3 stretches are compositionally biased toward low complexity: residues 807 to 829 (SQQPSSSSPGGEPFSGSAAAEGS), 849 to 860 (PSSHSQSPQHSQ), and 867 to 877 (ATTATCCRATQ). Positions 878-893 (TNARSRGQQHQPQKAR) are enriched in polar residues. Over residues 920–929 (HGRPRGKSGK) the composition is skewed to basic residues. Low complexity predominate over residues 938–951 (AAQAGASASFSSSA). Positions 988 to 1007 (GPDRRGGFRRVPRGDCHTPR) are enriched in basic and acidic residues.

It belongs to the herpesviridae ICP4 family. A long stretch of serine residues may be a major site of phosphorylation.

Its subcellular location is the host nucleus. Its function is as follows. This IE protein is a multifunctional protein capable of migrating to the nucleus, binding to DNA, trans-activating other viral genes, and autoregulating its own synthesis. The protein is Major viral transcription factor (IE) of Equine herpesvirus 1 (strain Ab4p) (EHV-1).